The primary structure comprises 306 residues: Putative dihydroorotate dehydrogenase A (fumarate) (306 aa).

Residues S24 and 48–49 (KS) each bind FMN. Substrate-binding positions include K48, 72-76 (NAVGL), and N129. N129 provides a ligand contact to FMN. C132 serves as the catalytic Nucleophile. Residues K167 and I192 each coordinate FMN. 193–194 (NS) is a binding site for substrate. FMN is bound by residues G218 and 244–245 (GG).

It belongs to the dihydroorotate dehydrogenase family. Type 1 subfamily. Homodimer. It depends on FMN as a cofactor.

Its subcellular location is the cytoplasm. It carries out the reaction (S)-dihydroorotate + fumarate = orotate + succinate. It functions in the pathway pyrimidine metabolism; UMP biosynthesis via de novo pathway. In terms of biological role, catalyzes the conversion of dihydroorotate to orotate with fumarate as the electron acceptor. The protein is Putative dihydroorotate dehydrogenase A (fumarate) (pyrD) of Aeropyrum pernix (strain ATCC 700893 / DSM 11879 / JCM 9820 / NBRC 100138 / K1).